The primary structure comprises 168 residues: Cell division inhibitor SulA (168 aa).

The interval 105–111 (ALETGNY) is ftsZ binding. The lon protease binding stretch occupies residues 161-168 (RIHSRMVH).

It belongs to the SulA family. Interacts with FtsZ. In terms of processing, is rapidly cleaved and degraded by the Lon protease once DNA damage is repaired.

In terms of biological role, component of the SOS system and an inhibitor of cell division. Accumulation of SulA causes rapid cessation of cell division and the appearance of long, non-septate filaments. In the presence of GTP, binds a polymerization-competent form of FtsZ in a 1:1 ratio, thus inhibiting FtsZ polymerization and therefore preventing it from participating in the assembly of the Z ring. This mechanism prevents the premature segregation of damaged DNA to daughter cells during cell division. The polypeptide is Cell division inhibitor SulA (Cronobacter turicensis (strain DSM 18703 / CCUG 55852 / LMG 23827 / z3032)).